The primary structure comprises 73 residues: UPF0154 protein MG335.1 (73 aa).

The chain crosses the membrane as a helical span at residues 6–26 (LALGLGIPLSLLVGMILGYFI).

This sequence belongs to the UPF0154 family.

The protein resides in the membrane. The chain is UPF0154 protein MG335.1 from Mycoplasma genitalium (strain ATCC 33530 / DSM 19775 / NCTC 10195 / G37) (Mycoplasmoides genitalium).